A 314-amino-acid polypeptide reads, in one-letter code: Bifunctional pinoresinol-lariciresinol reductase (314 aa).

NADP(+) is bound by residues Gly-10–Gly-16, Arg-35, and Lys-44. Lys-138 acts as the Proton acceptor in catalysis. NADP(+) is bound at residue Arg-142. His-270 contributes to the substrate binding site.

It belongs to the NmrA-type oxidoreductase family. Isoflavone reductase subfamily. In terms of assembly, dimer.

It carries out the reaction (+)-lariciresinol + NADP(+) = (+)-pinoresinol + NADPH + H(+). It catalyses the reaction (+)-secoisolariciresinol + NADP(+) = (-)-lariciresinol + NADPH + H(+). Reductase involved in the lignan justicidin B biosynthesis. Catalyzes the enantioselective conversion of (+)-pinoresinol into (+)-lariciresinol and of (-)-lariciresinol into (+)-secoisolariciresinol. Low activity with the other enantiomers. Abstracts the 4R-hydride from the NADPH cofactor during catalysis. The polypeptide is Bifunctional pinoresinol-lariciresinol reductase (PLR_Lp1) (Linum perenne (Perennial flax)).